Consider the following 307-residue polypeptide: MTSAQNESQALGDLAAGQLANATKTVPQLSTITPRWLLHLLNWVPVEAGVYRVNRVVNPERVAVKAEAGAGTEAPLPETFVDYETSPREYTLRTISTLLDIHTRVSDLYSSPHDQITQQLRLTIETIKERQECELVNSPEFGLLAQVTPEQTIRTFAGAPTPDDLDALITKVWKMPSFFLTHPQGIAAFGREATYRGVPPVVVSLFGAQFITWRGIPLIPSDKVPVQDGETKFILVRTGEERQGVVGLFQPGLVGEQAPGLSVRFTGINQAAIATYLVTLYTSLAVLTDDALAVLDNVAVDQFHEYK.

The protein belongs to the encapsulin family. Family 2A subfamily. As to quaternary structure, homooligomeric. The encapsulin nanocompartment is formed by 60 subunits; monomers form pentamers which assemble to form shells. There are 12 charged pores where the pentamers meet as well as 3-fold axis channels and dimer channels. Post-translationally, the N-terminus is blocked.

Its subcellular location is the encapsulin nanocompartment. It is found in the cytoplasm. It localises to the cytosol. The protein localises to the cell membrane. Functionally, shell component of a type 2A encapsulin nanocompartment. Forms encapsulin nanocompartments about 24 nm in diameter from 60 monomers. Probably encapsulates at least cysteine desulfurase (CyD, AC O32975) and allows passage of cysteine into its interior, probably involved in sulfur metabolism. Expression in M.smegmatis generates a multimeric protein, whereas expression in E.coli does not. This chain is Type 2A encapsulin shell protein, found in Mycobacterium leprae (strain TN).